Here is a 1185-residue protein sequence, read N- to C-terminus: Syntaxin-binding protein 5-like (1185 aa).

The residue at position 1 (M1) is an N-acetylmethionine. The interval 15-44 (ASSPGSGSSSGSNSGGAGSGSVHPGGTAGL) is disordered. A compositionally biased stretch (low complexity) spans 16-26 (SSPGSGSSSGS). 10 WD repeats span residues 73–106 (TALAFDPVQKILAIGTRTGAIRILGRPGVDCYCQ), 113–152 (VLQLQFLINEGALVSASSDDTLHLWNLRQKRPAILHSLKF), 157–193 (ITYCHLPFQSKWLYVGTERGNTHIVNIESFILSGYVI), 212–246 (HLSDSPRDEGKLLIGYENGTVVFWDLKSKRAELRV), 252–284 (IHSIDWHHEGKQFMCSHSDGSLTLWNLKSPSRP), 306–348 (PILK…KAIT), 356–390 (IVEFLTLCETPYPNEFQEPYAVAVLLEKDLIVVDL), 412–489 (TCTA…YKLK), 517–628 (QMIY…DLVI), and 642–704 (TSLS…IADN). T567 is modified (phosphothreonine). The disordered stretch occupies residues 567-601 (TPEPETSPPFPDLSSQLPPSRSLSGSTNTVSSEGV). 3 positions are modified to phosphoserine: S573, S588, and S592. Over residues 578–592 (DLSSQLPPSRSLSGS) the composition is skewed to low complexity. At T595 the chain carries Phosphothreonine. S598 is modified (phosphoserine). R708 carries the post-translational modification Omega-N-methylarginine. A compositionally biased stretch (polar residues) spans 747–768 (TSDHVNGHCTSPTSQSCSSGKR). Positions 747 to 770 (TSDHVNGHCTSPTSQSCSSGKRLS) are disordered. 11 positions are modified to phosphoserine: S762, S764, S765, S770, S771, S792, S799, S811, S819, S821, and S822. WD repeat units follow at residues 831 to 888 (ITAL…SGTF), 897 to 968 (TFSC…QTCL), 973 to 1017 (ITET…LDVN), and 1031 to 1054 (CFTNEGQALYLVSPTEIQRLTYSQ). At T1092 the chain carries Phosphothreonine. The region spanning 1120–1180 (SIEGMKGAAG…HELMLKYKDK (61 aa)) is the v-SNARE coiled-coil homology domain.

The protein belongs to the WD repeat L(2)GL family. In terms of assembly, interacts with STX1A and STX4. Phosphorylated, leading to STXBP5L increased turnover and subsequent de-repression of insulin secretion. Phosphorylated on serine residues in response to glucose or phorbol esters. Post-translationally, ubiquitinated by the E3 ligase SYVN1, leading to STXBP5L proteasomal degradation. In terms of tissue distribution, detected in hippocampus and cerebellum. Expressed in pancreatic beta-cells where it modulates insulin secretion.

It is found in the cytoplasm. The protein resides in the cell membrane. Its subcellular location is the membrane. Plays a role in vesicle trafficking and exocytosis inhibition. In pancreatic beta-cells, inhibits insulin secretion probably by interacting with and regulating STX1A and STX4, key t-SNARE proteins involved in the fusion of insulin granules to the plasma membrane. Also plays a role in neurotransmitter release by inhibiting basal acetylcholine release from axon terminals and by preventing synaptic fatigue upon repetitive stimulation. Promotes as well axonal outgrowth. The polypeptide is Syntaxin-binding protein 5-like (Stxbp5l) (Mus musculus (Mouse)).